A 206-amino-acid chain; its full sequence is Histidine biosynthesis bifunctional protein HisIE (206 aa).

The interval 1-117 (MCNEPATSDV…SCFPAAPGQF (117 aa)) is phosphoribosyl-AMP cyclohydrolase. The tract at residues 118–206 (LGALDALVAE…AVTVLEARHR (89 aa)) is phosphoribosyl-ATP pyrophosphohydrolase.

In the N-terminal section; belongs to the PRA-CH family. It in the C-terminal section; belongs to the PRA-PH family.

It localises to the cytoplasm. It catalyses the reaction 1-(5-phospho-beta-D-ribosyl)-ATP + H2O = 1-(5-phospho-beta-D-ribosyl)-5'-AMP + diphosphate + H(+). It carries out the reaction 1-(5-phospho-beta-D-ribosyl)-5'-AMP + H2O = 1-(5-phospho-beta-D-ribosyl)-5-[(5-phospho-beta-D-ribosylamino)methylideneamino]imidazole-4-carboxamide. The protein operates within amino-acid biosynthesis; L-histidine biosynthesis; L-histidine from 5-phospho-alpha-D-ribose 1-diphosphate: step 2/9. It functions in the pathway amino-acid biosynthesis; L-histidine biosynthesis; L-histidine from 5-phospho-alpha-D-ribose 1-diphosphate: step 3/9. The sequence is that of Histidine biosynthesis bifunctional protein HisIE (hisI) from Xylella fastidiosa (strain 9a5c).